The chain runs to 534 residues: High-affinity nicotinic acid transporter (534 aa).

Over 1-130 (MSNKFTMESP…DIHLVGTQYN (130 aa)) the chain is Extracellular. A disordered region spans residues 21 to 56 (SPTNDGSEEKPTEVTFQEDEGHDASLHNRSHDKKSE). The residue at position 27 (Ser27) is a Phosphoserine. Residues 131-151 (TCVTVFFATYVLFDPIGTNLL) traverse the membrane as a helical segment. A topological domain (cytoplasmic) is located at residue Lys152. Residues 153–173 (IMGPPLMMSICLTCFGAISLG) traverse the membrane as a helical segment. Topologically, residues 174–187 (TAWVKNYAQLIVVR) are extracellular. The helical transmembrane segment at 188–208 (LLLGAFEGMIYPAINMYLSVC) threads the bilayer. Residues 209 to 217 (YRREQYALR) lie on the Cytoplasmic side of the membrane. Residues 218–238 (FAFVFSAACLSSSFGGLIAYG) traverse the membrane as a helical segment. The Extracellular segment spans residues 239–250 (CSKISGSLKDWQ). Residues 251 to 271 (YIYIVEGCISLGFVPFYAFGL) form a helical membrane-spanning segment. The Cytoplasmic portion of the chain corresponds to 272–323 (SKNLEDSWFFNKEEKEYISERYKTMNTFDPDEKFEWFQVWQAVKDVKTWASA). Residue Lys283 forms a Glycyl lysine isopeptide (Lys-Gly) (interchain with G-Cter in ubiquitin) linkage. A helical membrane pass occupies residues 324–344 (VALFGIDLTTFGLTVFLPIII). At 345–355 (TSMGFTNVRAQ) the chain is on the extracellular side. Residues 356–376 (LMTVPIYFLTAIVFFICAVWS) form a helical membrane-spanning segment. Over 377–384 (DRIKLRSP) the chain is Cytoplasmic. A helical transmembrane segment spans residues 385–405 (FILGACLTTSIGIAIVLGSQV). Topologically, residues 406–410 (HGVRY) are extracellular. Residues 411–431 (FGVYILCMGIYVNAACNCLWL) form a helical membrane-spanning segment. The Cytoplasmic portion of the chain corresponds to 432–444 (SGNTGNYFKRATA). The chain crosses the membrane as a helical span at residues 445 to 465 (LGINLFFGSGSGLVSGQIFVA). The Extracellular segment spans residues 466-474 (KDKPRYIKG). A helical membrane pass occupies residues 475–495 (LSISLAFQVFSIFMTVVQIFL). Residues 496-534 (YKRENDKKKAIIDRCNELGEPIPYDERLSDKNPEFKYMY) lie on the Cytoplasmic side of the membrane.

Belongs to the major facilitator superfamily. Allantoate permease family.

It is found in the membrane. Involved in the uptake of nicotinic acid. In Saccharomyces cerevisiae (strain ATCC 204508 / S288c) (Baker's yeast), this protein is High-affinity nicotinic acid transporter (TNA1).